A 490-amino-acid chain; its full sequence is Glutamate--tRNA ligase (490 aa).

The 'HIGH' region motif lies at 10–20; it reads PSPTGRMHVGN. Cysteine 109, cysteine 111, cysteine 140, and histidine 142 together coordinate Zn(2+). The 'KMSKS' region motif lies at 257-261; it reads KLSKR. An ATP-binding site is contributed by lysine 260.

It belongs to the class-I aminoacyl-tRNA synthetase family. Glutamate--tRNA ligase type 1 subfamily. In terms of assembly, monomer. Requires Zn(2+) as cofactor.

It localises to the cytoplasm. The catalysed reaction is tRNA(Glu) + L-glutamate + ATP = L-glutamyl-tRNA(Glu) + AMP + diphosphate. Functionally, catalyzes the attachment of glutamate to tRNA(Glu) in a two-step reaction: glutamate is first activated by ATP to form Glu-AMP and then transferred to the acceptor end of tRNA(Glu). This is Glutamate--tRNA ligase from Lachnoclostridium phytofermentans (strain ATCC 700394 / DSM 18823 / ISDg) (Clostridium phytofermentans).